Consider the following 99-residue polypeptide: MSEIIRQVMISGRVQGVGYRAWLAHTAEAMGLHGWVRNRRDGSVEAVLAGSEPIVSEMIARCQRGPSAARVEAVVAEIAQPDVLNLRQPGERFSILSTL.

In terms of domain architecture, Acylphosphatase-like spans 5 to 97 (IRQVMISGRV…QPGERFSILS (93 aa)). Active-site residues include Arg20 and Asn38.

It belongs to the acylphosphatase family.

The enzyme catalyses an acyl phosphate + H2O = a carboxylate + phosphate + H(+). This Rhodopseudomonas palustris (strain ATCC BAA-98 / CGA009) protein is Acylphosphatase (acyP).